Consider the following 457-residue polypeptide: Probable xyloglucan 6-xylosyltransferase 3 (457 aa).

The segment at 1–40 is disordered; that stretch reads MGKEDGFRTQKRVSTASSAAAGVLPTTMASGGVRRPPPRG. Topologically, residues 1–51 are cytoplasmic; sequence MGKEDGFRTQKRVSTASSAAAGVLPTTMASGGVRRPPPRGRQIQKTFNNVK. A helical; Signal-anchor for type II membrane protein membrane pass occupies residues 52–71; that stretch reads MTILCGFVTILVLRGTIGIN. Over 72–457 the chain is Lumenal; that stretch reads FGTSDADVVN…TTPLKIEARS (386 aa). N-linked (GlcNAc...) asparagine glycans are attached at residues asparagine 115 and asparagine 431.

This sequence belongs to the glycosyltransferase 34 family.

It is found in the golgi apparatus membrane. The enzyme catalyses Transfers an alpha-D-xylosyl residue from UDP-D-xylose to a glucose residue in xyloglucan, forming an alpha-(1-&gt;6)-D-xylosyl-D-glucose linkage.. Its function is as follows. Probable xyloglucan xylosyltransferase involved in the biosynthesis of xyloglucan. The sequence is that of Probable xyloglucan 6-xylosyltransferase 3 from Arabidopsis thaliana (Mouse-ear cress).